Reading from the N-terminus, the 87-residue chain is Small ribosomal subunit protein bS20 (87 aa).

Positions 1-20 are disordered; sequence MANSAQARKRARTALKQRAH. Over residues 7-19 the composition is skewed to basic residues; sequence ARKRARTALKQRA.

It belongs to the bacterial ribosomal protein bS20 family.

Functionally, binds directly to 16S ribosomal RNA. This is Small ribosomal subunit protein bS20 from Chromobacterium violaceum (strain ATCC 12472 / DSM 30191 / JCM 1249 / CCUG 213 / NBRC 12614 / NCIMB 9131 / NCTC 9757 / MK).